Reading from the N-terminus, the 433-residue chain is Protein translocase subunit SecD (433 aa).

6 helical membrane passes run 7-27 (LAFL…GPKI), 257-277 (LIAG…AYRM), 278-298 (AGLI…LTFA), 300-320 (LHVV…GIAV), 354-374 (TIVD…IFGG), and 380-400 (GFAV…VLFA).

It belongs to the SecD/SecF family. SecD subfamily. Forms a complex with SecF. Part of the essential Sec protein translocation apparatus which comprises SecA, SecYEG and auxiliary proteins SecDF. Other proteins may also be involved.

The protein localises to the cell membrane. Part of the Sec protein translocase complex. Interacts with the SecYEG preprotein conducting channel. SecDF uses the proton motive force (PMF) to complete protein translocation after the ATP-dependent function of SecA. The sequence is that of Protein translocase subunit SecD from Alicyclobacillus acidocaldarius subsp. acidocaldarius (strain ATCC 27009 / DSM 446 / BCRC 14685 / JCM 5260 / KCTC 1825 / NBRC 15652 / NCIMB 11725 / NRRL B-14509 / 104-IA) (Bacillus acidocaldarius).